Consider the following 346-residue polypeptide: tRNA pseudouridine synthase D (346 aa).

Asp83 (nucleophile) is an active-site residue. Positions 159-305 constitute a TRUD domain; the sequence is GVPNYFGEQR…LKQERRALRV (147 aa).

This sequence belongs to the pseudouridine synthase TruD family.

It carries out the reaction uridine(13) in tRNA = pseudouridine(13) in tRNA. Responsible for synthesis of pseudouridine from uracil-13 in transfer RNAs. In Hydrogenovibrio crunogenus (strain DSM 25203 / XCL-2) (Thiomicrospira crunogena), this protein is tRNA pseudouridine synthase D.